We begin with the raw amino-acid sequence, 664 residues long: Probable 3',5'-cyclic phosphodiesterase pde-1 (664 aa).

Disordered stretches follow at residues 24–60 (TSSASEEHGDSDKKLLSVQLITPRDEEEQTSSRSIKI) and 113–142 (RNQKEKSNSDDNCQEKEPTSPSSSRKKSYD). 2 stretches are compositionally biased toward basic and acidic residues: residues 28–38 (SEEHGDSDKKL) and 114–130 (NQKEKSNSDDNCQEKEP). The 379-residue stretch at 256–634 (VQCPIPPEIA…AHWKERAAKE (379 aa)) folds into the PDEase domain. The active-site Proton donor is the His333. Residues His337, His373, Asp374, and Asp480 each contribute to the a divalent metal cation site. Disordered stretches follow at residues 564-597 (DSLFPPSVDGGDDKSPSNALSPLPDLRNSSTSPS) and 630-664 (RAAKEEEERKIKEAAEAEAAAKQVEENKENGVTTN). Over residues 630–644 (RAAKEEEERKIKEAA) the composition is skewed to basic and acidic residues.

Belongs to the cyclic nucleotide phosphodiesterase family. In terms of assembly, interacts with cmd-1 in the presence of Ca(2+). A divalent metal cation serves as cofactor. As to expression, expressed in AFD thermosensory neurons.

The enzyme catalyses a nucleoside 3',5'-cyclic phosphate + H2O = a nucleoside 5'-phosphate + H(+). Its function is as follows. Redundantly with pde-5, plays a role in the AFD thermosensory neurons to regulate microvilli receptive ending morphology, possibly by regulating cGMP levels. The protein is Probable 3',5'-cyclic phosphodiesterase pde-1 (pde-1) of Caenorhabditis elegans.